The following is a 400-amino-acid chain: tRNA-specific 2-thiouridylase MnmA (400 aa).

ATP-binding positions include 19–26 (AMSGGVDS) and Leu45. The active-site Nucleophile is the Cys113. A disulfide bridge connects residues Cys113 and Cys210. Gly137 is a binding site for ATP. Residues 160 to 162 (RDQ) form an interaction with tRNA region. Catalysis depends on Cys210, which acts as the Cysteine persulfide intermediate.

It belongs to the MnmA/TRMU family.

The protein resides in the cytoplasm. The enzyme catalyses S-sulfanyl-L-cysteinyl-[protein] + uridine(34) in tRNA + AH2 + ATP = 2-thiouridine(34) in tRNA + L-cysteinyl-[protein] + A + AMP + diphosphate + H(+). Catalyzes the 2-thiolation of uridine at the wobble position (U34) of tRNA, leading to the formation of s(2)U34. This is tRNA-specific 2-thiouridylase MnmA from Nitrobacter winogradskyi (strain ATCC 25391 / DSM 10237 / CIP 104748 / NCIMB 11846 / Nb-255).